Reading from the N-terminus, the 916-residue chain is Phosphoenolpyruvate carboxylase (916 aa).

Residues histidine 144 and lysine 578 contribute to the active site.

Belongs to the PEPCase type 1 family. Requires Mg(2+) as cofactor.

It catalyses the reaction oxaloacetate + phosphate = phosphoenolpyruvate + hydrogencarbonate. In terms of biological role, forms oxaloacetate, a four-carbon dicarboxylic acid source for the tricarboxylic acid cycle. In Aromatoleum aromaticum (strain DSM 19018 / LMG 30748 / EbN1) (Azoarcus sp. (strain EbN1)), this protein is Phosphoenolpyruvate carboxylase.